The sequence spans 928 residues: Type II inositol 3,4-bisphosphate 4-phosphatase (928 aa).

Residues 1 to 13 (MEIKEEGTSEEGQ) are compositionally biased toward basic and acidic residues. Disordered stretches follow at residues 1 to 23 (MEIKEEGTSEEGQHFLPAAQAND), 481 to 516 (ILRKPPSPKVSTEEKSSQHDSPQQLRRQDSIPHHSD), and 548 to 575 (SRNDKSTGGDSSKDGDADPNLEDSLTSH). The C2 domain occupies 23–165 (DPEDIQFTSI…LKSKEQLLSL (143 aa)). Basic and acidic residues-rich tracts occupy residues 506 to 516 (RRQDSIPHHSD) and 548 to 563 (SRNDKSTGGDSSKDGD).

It belongs to the inositol 3,4-bisphosphate 4-phosphatase family.

It carries out the reaction a 1,2-diacyl-sn-glycero-3-phospho-(1D-myo-inositol-3,4-bisphosphate) + H2O = a 1,2-diacyl-sn-glycero-3-phospho-(1D-myo-inositol-3-phosphate) + phosphate. The enzyme catalyses 1D-myo-inositol 3,4-bisphosphate + H2O = 1D-myo-inositol 3-phosphate + phosphate. The catalysed reaction is 1D-myo-inositol 1,3,4-trisphosphate + H2O = 1D-myo-inositol 1,3-bisphosphate + phosphate. It participates in signal transduction; phosphatidylinositol signaling pathway. With respect to regulation, strongly inhibited by inositol hexakisphosphate. Its function is as follows. Catalyzes the hydrolysis of the 4-position phosphate of phosphatidylinositol 3,4-bisphosphate, inositol 1,3,4-trisphosphate and inositol 3,4-bisphosphate. Plays a role in the late stages of macropinocytosis by dephosphorylating phosphatidylinositol 3,4-bisphosphate in membrane ruffles. The lipid phosphatase activity is critical for tumor suppressor function. Antagonizes the PI3K-AKT/PKB signaling pathway by dephosphorylating phosphoinositides and thereby modulating cell cycle progression and cell survival. The protein is Type II inositol 3,4-bisphosphate 4-phosphatase (Inpp4b) of Rattus norvegicus (Rat).